An 86-amino-acid polypeptide reads, in one-letter code: Weak neurotoxin 8 (86 aa).

Positions Met1–Thr21 are cleaved as a signal peptide. Intrachain disulfides connect Cys24-Cys45, Cys27-Cys32, Cys38-Cys63, Cys67-Cys78, and Cys79-Cys84.

This sequence belongs to the three-finger toxin family. Ancestral subfamily. Orphan group II sub-subfamily. Expressed by the venom gland.

The protein localises to the secreted. Binds with low affinity to muscular (alpha-1-beta-1-delta-epsilon/CHRNA1-CHRNB1-CHRND-CHRNE) and very low affinity to neuronal (alpha-7/CHRNA7) nicotinic acetylcholine receptor (nAChR). The sequence is that of Weak neurotoxin 8 from Naja sputatrix (Malayan spitting cobra).